The primary structure comprises 426 residues: MKQLRLEPVVQVRGEINIPGSKSISNRALLLATLAQGTTTLTNLLDSDDIRHMLASLKQLGVNYRLSQNNTVCELDGLGGVISSESAQELFLGNAGTAMRPLCAALTLGQGEFTLTCEPRMEERPIGDLVDALRQLGANVVYLKNDGFPPLTINATGLSGGDVEIAGDLSSQFLTALLMVAPLAKGSVNIHVKGELVSKPYIDITLALMAQFGVTVINHDYARFEIVAGQRYVSPGKVLVEGDASSASYFLAAGAIKGGEVKVTGVGRLSIQGDVKFADVLEKMGAEIEWGDDYIIARGSQLTAVDLDMNHIPDAAMTIATAALFAKGTTVIRNIYNWRIKETDRLAAMATELRKVGAEVEEGNDYIKITPPAVINTAEIDTYNDHRMAMCFSMLAFADCGITINDPDCTSKTFPDYFKQFASLQG.

3-phosphoshikimate is bound by residues Lys-22, Ser-23, and Arg-27. Lys-22 is a phosphoenolpyruvate binding site. 2 residues coordinate phosphoenolpyruvate: Gly-96 and Arg-124. 7 residues coordinate 3-phosphoshikimate: Ser-170, Ser-171, Gln-172, Ser-198, Asp-314, Asn-337, and Lys-341. Gln-172 is a phosphoenolpyruvate binding site. Asp-314 functions as the Proton acceptor in the catalytic mechanism. The phosphoenolpyruvate site is built by Arg-345, Arg-387, and Lys-412.

Belongs to the EPSP synthase family. Monomer.

It is found in the cytoplasm. The enzyme catalyses 3-phosphoshikimate + phosphoenolpyruvate = 5-O-(1-carboxyvinyl)-3-phosphoshikimate + phosphate. It functions in the pathway metabolic intermediate biosynthesis; chorismate biosynthesis; chorismate from D-erythrose 4-phosphate and phosphoenolpyruvate: step 6/7. Functionally, catalyzes the transfer of the enolpyruvyl moiety of phosphoenolpyruvate (PEP) to the 5-hydroxyl of shikimate-3-phosphate (S3P) to produce enolpyruvyl shikimate-3-phosphate and inorganic phosphate. This chain is 3-phosphoshikimate 1-carboxyvinyltransferase, found in Shewanella baltica (strain OS195).